The sequence spans 1038 residues: Importin-7 (1038 aa).

N-acetylmethionine is present on Met1. Positions 22–101 constitute an Importin N-terminal domain; it reads AERQLNEAHK…RENIVEAIIH (80 aa). The interval 881–910 is disordered; that stretch reads EHENDSDDDDEAEDDDETEELGSDEDDIDE. Residues 884–910 are compositionally biased toward acidic residues; sequence NDSDDDDEAEDDDETEELGSDEDDIDE. Ser886 carries the phosphoserine modification. Thr898 is modified (phosphothreonine). Residues Ser903 and Ser1020 each carry the phosphoserine modification.

Belongs to the importin beta family. Forms a heterodimer with KPNB1. Interacts with histone H1. Interacts with H2A, H2B, H3 and H4 histones. Interacts with SNUPN and XPO1. Interacts with RPS7 and RPL5. Interacts with RPL23A (via BIB domain). Binds directly to nuclear pore complexes. Interacts with SMAD4 and NUP93; translocates SMAD4 to the nucleus through the NPC upon BMP7 stimulation resulting in activation of SMAD4 signaling. Interacts with phosphorylated SMAD2; the interaction facilitates translocation of SMAD2 to the nucleus. Interacts with SRP19. Interacts with RUNX2; the interaction inhibits RUNX2 nuclear translocation in osteoblasts. Interacts with HDAC6, DLX3 and KLF4; the interaction facilitates HDAC6, DLX3 and KLF4 nuclear translocation in dental papilla cells. As to quaternary structure, (Microbial infection) Interacts with HIV-1 reverse transcription complex integrase and rev.

The protein resides in the cytoplasm. It localises to the nucleus. Functionally, functions in nuclear protein import, either by acting as autonomous nuclear transport receptor or as an adapter-like protein in association with the importin-beta subunit KPNB1. Acting autonomously, is thought to serve itself as receptor for nuclear localization signals (NLS) and to promote translocation of import substrates through the nuclear pore complex (NPC) by an energy requiring, Ran-dependent mechanism. At the nucleoplasmic side of the NPC, Ran binds to importin, the importin/substrate complex dissociates and importin is re-exported from the nucleus to the cytoplasm where GTP hydrolysis releases Ran. The directionality of nuclear import is thought to be conferred by an asymmetric distribution of the GTP- and GDP-bound forms of Ran between the cytoplasm and nucleus. Mediates autonomously the nuclear import of ribosomal proteins RPL23A, RPS7 and RPL5. In association with KPNB1 mediates the nuclear import of H1 histone and the Ran-binding site of IPO7 is not required but synergizes with that of KPNB1 in importin/substrate complex dissociation. Promotes odontoblast differentiation via promoting nuclear translocation of DLX3, KLF4, SMAD2, thereby facilitating the transcription of target genes that play a role in odontoblast differentiation. Facilitates BMP4-induced translocation of SMAD1 to the nucleus and recruitment to the MSX1 gene promoter, thereby promotes the expression of the odontogenic regulator MSX1 in dental mesenchymal cells. Also promotes odontoblast differentiation by facilitating the nuclear translocation of HDAC6 and subsequent repression of RUNX2 expression. Inhibits osteoblast differentiation by inhibiting nuclear translocation of RUNX2 and therefore inhibition of RUNX2 target gene transcription. In vitro, mediates nuclear import of H2A, H2B, H3 and H4 histones. Its function is as follows. (Microbial infection) Mediates the nuclear import of HIV-1 reverse transcription complex (RTC) integrase. Binds and mediates the nuclear import of HIV-1 Rev. This chain is Importin-7 (IPO7), found in Homo sapiens (Human).